The chain runs to 360 residues: Phospho-N-acetylmuramoyl-pentapeptide-transferase (360 aa).

10 consecutive transmembrane segments (helical) span residues Y21 to G41, T73 to L93, A94 to V114, W132 to G152, I168 to G188, G199 to T219, V239 to Y259, V263 to L283, F288 to V308, and V338 to K358.

The protein belongs to the glycosyltransferase 4 family. MraY subfamily. The cofactor is Mg(2+).

Its subcellular location is the cell inner membrane. It catalyses the reaction UDP-N-acetyl-alpha-D-muramoyl-L-alanyl-gamma-D-glutamyl-meso-2,6-diaminopimeloyl-D-alanyl-D-alanine + di-trans,octa-cis-undecaprenyl phosphate = di-trans,octa-cis-undecaprenyl diphospho-N-acetyl-alpha-D-muramoyl-L-alanyl-D-glutamyl-meso-2,6-diaminopimeloyl-D-alanyl-D-alanine + UMP. It participates in cell wall biogenesis; peptidoglycan biosynthesis. Its function is as follows. Catalyzes the initial step of the lipid cycle reactions in the biosynthesis of the cell wall peptidoglycan: transfers peptidoglycan precursor phospho-MurNAc-pentapeptide from UDP-MurNAc-pentapeptide onto the lipid carrier undecaprenyl phosphate, yielding undecaprenyl-pyrophosphoryl-MurNAc-pentapeptide, known as lipid I. This chain is Phospho-N-acetylmuramoyl-pentapeptide-transferase, found in Haemophilus influenzae (strain 86-028NP).